A 427-amino-acid chain; its full sequence is 3-phosphoshikimate 1-carboxyvinyltransferase (427 aa).

3-phosphoshikimate-binding residues include K22, S23, and R27. Residue K22 participates in phosphoenolpyruvate binding. Residues G96 and R124 each coordinate phosphoenolpyruvate. Residues S169, S170, Q171, S197, D313, N336, and K340 each coordinate 3-phosphoshikimate. Q171 contacts phosphoenolpyruvate. The active-site Proton acceptor is D313. Positions 344, 386, and 411 each coordinate phosphoenolpyruvate.

The protein belongs to the EPSP synthase family. As to quaternary structure, monomer.

The protein localises to the cytoplasm. It carries out the reaction 3-phosphoshikimate + phosphoenolpyruvate = 5-O-(1-carboxyvinyl)-3-phosphoshikimate + phosphate. It functions in the pathway metabolic intermediate biosynthesis; chorismate biosynthesis; chorismate from D-erythrose 4-phosphate and phosphoenolpyruvate: step 6/7. Catalyzes the transfer of the enolpyruvyl moiety of phosphoenolpyruvate (PEP) to the 5-hydroxyl of shikimate-3-phosphate (S3P) to produce enolpyruvyl shikimate-3-phosphate and inorganic phosphate. The chain is 3-phosphoshikimate 1-carboxyvinyltransferase from Shigella flexneri serotype 5b (strain 8401).